The following is a 141-amino-acid chain: MAKKVVGQIKLQIPAGKATPAPPVGPALGQHGVNIMGFCKEFNAKTADQAGMIIPVIISVYQDRSYTFITKTPPAAILIKKAAGIDKASGEPHTKKVATISKAKVKEIAELKMPDLNASSVESAMSMIAGTARSMGVVVED.

This sequence belongs to the universal ribosomal protein uL11 family. In terms of assembly, part of the ribosomal stalk of the 50S ribosomal subunit. Interacts with L10 and the large rRNA to form the base of the stalk. L10 forms an elongated spine to which L12 dimers bind in a sequential fashion forming a multimeric L10(L12)X complex. Post-translationally, one or more lysine residues are methylated.

Its function is as follows. Forms part of the ribosomal stalk which helps the ribosome interact with GTP-bound translation factors. The chain is Large ribosomal subunit protein uL11 from Alkaliphilus metalliredigens (strain QYMF).